A 186-amino-acid polypeptide reads, in one-letter code: Single-stranded DNA-binding protein 1 (186 aa).

The region spanning 1–108 (MDATVTVVGN…LEIDEIGPTL (108 aa)) is the SSB domain. Residues 120 to 186 (QAGHGVSPDP…EDFDSDEVPF (67 aa)) are disordered. Residues 132 to 141 (DSQTGQGIDS) show a composition bias toward polar residues. Acidic residues predominate over residues 175-186 (SYEDFDSDEVPF).

As to quaternary structure, homotetramer.

The polypeptide is Single-stranded DNA-binding protein 1 (ssb1) (Tropheryma whipplei (strain TW08/27) (Whipple's bacillus)).